A 150-amino-acid chain; its full sequence is Large ribosomal subunit protein bL9 (150 aa).

The protein belongs to the bacterial ribosomal protein bL9 family.

In terms of biological role, binds to the 23S rRNA. This is Large ribosomal subunit protein bL9 from Burkholderia mallei (strain NCTC 10247).